Here is a 260-residue protein sequence, read N- to C-terminus: Cytosolic Fe-S cluster assembly factor Nubp2 homolog (260 aa).

14–21 (GKGGVGKS) contributes to the ATP binding site. [4Fe-4S] cluster is bound by residues cysteine 188 and cysteine 191.

The protein belongs to the Mrp/NBP35 ATP-binding proteins family. NUBP2/CFD1 subfamily. Heterotetramer of 2 Nubp1 and 2 Nubp2 chains. Requires [4Fe-4S] cluster as cofactor.

It localises to the cytoplasm. Its function is as follows. Component of the cytosolic iron-sulfur (Fe/S) protein assembly (CIA) machinery. Required for maturation of extramitochondrial Fe-S proteins. The Nubp1-Nubp2 heterotetramer forms a Fe-S scaffold complex, mediating the de novo assembly of an Fe-S cluster and its transfer to target apoproteins. The chain is Cytosolic Fe-S cluster assembly factor Nubp2 homolog from Drosophila erecta (Fruit fly).